Here is a 240-residue protein sequence, read N- to C-terminus: Sugar fermentation stimulation protein homolog (240 aa).

Belongs to the SfsA family.

This chain is Sugar fermentation stimulation protein homolog, found in Saccharolobus solfataricus (strain ATCC 35092 / DSM 1617 / JCM 11322 / P2) (Sulfolobus solfataricus).